A 252-amino-acid chain; its full sequence is Triosephosphate isomerase (252 aa).

Residue asparagine 9–lysine 11 coordinates substrate. The active-site Electrophile is histidine 95. Glutamate 167 (proton acceptor) is an active-site residue. Substrate-binding positions include glycine 173, serine 211, and glycine 232–glycine 233.

Belongs to the triosephosphate isomerase family. As to quaternary structure, homodimer.

It is found in the cytoplasm. It carries out the reaction D-glyceraldehyde 3-phosphate = dihydroxyacetone phosphate. It functions in the pathway carbohydrate biosynthesis; gluconeogenesis. It participates in carbohydrate degradation; glycolysis; D-glyceraldehyde 3-phosphate from glycerone phosphate: step 1/1. Its function is as follows. Involved in the gluconeogenesis. Catalyzes stereospecifically the conversion of dihydroxyacetone phosphate (DHAP) to D-glyceraldehyde-3-phosphate (G3P). In Marinobacter nauticus (strain ATCC 700491 / DSM 11845 / VT8) (Marinobacter aquaeolei), this protein is Triosephosphate isomerase.